Reading from the N-terminus, the 243-residue chain is Pyridoxine 5'-phosphate synthase (243 aa).

N6 serves as a coordination point for 3-amino-2-oxopropyl phosphate. 8-9 (DH) provides a ligand contact to 1-deoxy-D-xylulose 5-phosphate. R17 is a binding site for 3-amino-2-oxopropyl phosphate. H42 functions as the Proton acceptor in the catalytic mechanism. 1-deoxy-D-xylulose 5-phosphate contacts are provided by R44 and H49. E72 serves as the catalytic Proton acceptor. T102 serves as a coordination point for 1-deoxy-D-xylulose 5-phosphate. Residue H192 is the Proton donor of the active site. Residues G193 and 214–215 (GH) each bind 3-amino-2-oxopropyl phosphate.

It belongs to the PNP synthase family. As to quaternary structure, homooctamer; tetramer of dimers.

The protein localises to the cytoplasm. The enzyme catalyses 3-amino-2-oxopropyl phosphate + 1-deoxy-D-xylulose 5-phosphate = pyridoxine 5'-phosphate + phosphate + 2 H2O + H(+). The protein operates within cofactor biosynthesis; pyridoxine 5'-phosphate biosynthesis; pyridoxine 5'-phosphate from D-erythrose 4-phosphate: step 5/5. In terms of biological role, catalyzes the complicated ring closure reaction between the two acyclic compounds 1-deoxy-D-xylulose-5-phosphate (DXP) and 3-amino-2-oxopropyl phosphate (1-amino-acetone-3-phosphate or AAP) to form pyridoxine 5'-phosphate (PNP) and inorganic phosphate. This is Pyridoxine 5'-phosphate synthase from Sulfurihydrogenibium sp. (strain YO3AOP1).